Reading from the N-terminus, the 201-residue chain is Small ribosomal subunit protein uS4c (201 aa).

In terms of domain architecture, S4 RNA-binding spans M89 to K149.

Belongs to the universal ribosomal protein uS4 family. In terms of assembly, part of the 30S ribosomal subunit. Contacts protein S5. The interaction surface between S4 and S5 is involved in control of translational fidelity.

It localises to the plastid. Functionally, one of the primary rRNA binding proteins, it binds directly to 16S rRNA where it nucleates assembly of the body of the 30S subunit. Its function is as follows. With S5 and S12 plays an important role in translational accuracy. The sequence is that of Small ribosomal subunit protein uS4c (rps4) from Cuscuta reflexa (Southern Asian dodder).